The chain runs to 183 residues: Putative 3-methyladenine DNA glycosylase (183 aa).

It belongs to the DNA glycosylase MPG family.

This chain is Putative 3-methyladenine DNA glycosylase, found in Rickettsia africae (strain ESF-5).